Reading from the N-terminus, the 325-residue chain is GMP reductase (325 aa).

Catalysis depends on cysteine 174, which acts as the Thioimidate intermediate. Residue 203 to 226 (IIADGGIRTHGDIAKSIRFGATMV) participates in NADP(+) binding.

It belongs to the IMPDH/GMPR family. GuaC type 2 subfamily.

It carries out the reaction IMP + NH4(+) + NADP(+) = GMP + NADPH + 2 H(+). Functionally, catalyzes the irreversible NADPH-dependent deamination of GMP to IMP. It functions in the conversion of nucleobase, nucleoside and nucleotide derivatives of G to A nucleotides, and in maintaining the intracellular balance of A and G nucleotides. In Helicobacter pylori (strain G27), this protein is GMP reductase.